Here is a 1218-residue protein sequence, read N- to C-terminus: ABC transporter NFT1 (1218 aa).

At 1–29 (MIKNGTCPYWERDDLSECARREYIEFKFP) the chain is on the extracellular side. A glycan (N-linked (GlcNAc...) asparagine) is linked at asparagine 4. Residues 30 to 50 (LFILLTGMIYAFCKVFRAFYL) form a helical membrane-spanning segment. The Cytoplasmic segment spans residues 51 to 103 (RGKNHTNEAPEFEEQGNGNHEYARFSVLRLKSAWESRSFCNVNNRSTFDKFKK). The helical transmembrane segment at 104 to 124 (FIEGAFIVLQLTIHLYILSSM) threads the bilayer. Residues 125–130 (PMDNKK) lie on the Extracellular side of the membrane. Residues 131-151 (FFHQGFLVQMFLWILLLVVIT) traverse the membrane as a helical segment. At 152-169 (LRLISASQSFRWVLACKR) the chain is on the cytoplasmic side. Residues 170–190 (DLWAVSFYSYASLFTLSILPL) form a helical membrane-spanning segment. Over 191–201 (RSVFIGKIKDK) the chain is Extracellular. Residues 202–222 (IMVKYIISETFIDLALLLLLS) form a helical membrane-spanning segment. Residues 223 to 302 (TSSIEGTRYS…SSKKGRLLPN (80 aa)) are Cytoplasmic-facing. Residues 303-323 (IICYFKAVFISQLFLAFVSSF) form a helical membrane-spanning segment. Residues 311-621 (FISQLFLAFV…IASTVSLLIQ (311 aa)) enclose the ABC transmembrane type-1 1 domain. The Extracellular segment spans residues 324 to 351 (LNFVPSLLMPRILSYVNDPKSKSWNLVS). The chain crosses the membrane as a helical span at residues 352–374 (LYVSSMLVSKIIATTCRGQGLFL). Residues 375–449 (GEKGTMQLRT…VMSIDAFKVS (75 aa)) lie on the Cytoplasmic side of the membrane. A disordered region spans residues 410–434 (NASTSFEENPDSSEAEPRKKSSRKD). Residues 424–434 (AEPRKKSSRKD) show a composition bias toward basic and acidic residues. The helical transmembrane segment at 450 to 470 (EAMNTFYLACEAVFMTVTALM) threads the bilayer. At 471–481 (ILYSLLGWSAF) the chain is on the extracellular side. A helical membrane pass occupies residues 482 to 504 (AGTFALLAMIPLNFWCATFYGNY). The Cytoplasmic segment spans residues 505 to 558 (QADQLILTDKRTSGISEALNSIRVIKLLAWENLFYQKIINVRDGEIRLLKKKAT). The helical transmembrane segment at 559 to 579 (IFFLNHLIWFFGPTLVSAITF) threads the bilayer. Residues 580-584 (SVFIK) lie on the Extracellular side of the membrane. Residues 585–605 (FQNQTLTPTIAFTALSLFAIL) form a helical membrane-spanning segment. The Cytoplasmic portion of the chain corresponds to 606–953 (RTPMDQIAST…KFSAYKWLAD (348 aa)). The ABC transporter domain occupies 651–892 (FGFEDASMEW…NEFLRESINN (242 aa)). Residue 686-693 (GPTGSGKS) participates in ATP binding. Positions 892 to 901 (NDSKNTTHNQ) are enriched in polar residues. The interval 892–926 (NDSKNTTHNQIDLKRSTTSKKTKNGDPEGGNSQDE) is disordered. The chain crosses the membrane as a helical span at residues 954–974 (YFGGLGVVFVFTSSSILIHGI). The ABC transmembrane type-1 2 domain occupies 961–1218 (VFVFTSSSIL…SSVMIIMKAS (258 aa)). The Extracellular portion of the chain corresponds to 975–1013 (TLSQGFWLRYWLDTGSSGSKSTWLYRIVEGHSNIYFLLT). The helical transmembrane segment at 1014 to 1034 (YIIIGLVSSFLTSGKVWIAII) threads the bilayer. Residues 1035 to 1082 (SGTNVTKKIFAKLLSSILYAKLRFHNVTPTGRIMNRFSKDMDIIDQQL) lie on the Cytoplasmic side of the membrane. A helical transmembrane segment spans residues 1083–1105 (IPNFEGLSYSVVVCLWIILLIGY). Residues 1106 to 1109 (VTPQ) lie on the Extracellular side of the membrane. A helical transmembrane segment spans residues 1110 to 1132 (FLLFAIPLCALYYTVCTLYLRAS). The Cytoplasmic portion of the chain corresponds to 1133-1197 (RELKRIDNIN…NMATEWITYR (65 aa)). Residues 1198 to 1218 (VDIIGTLVLFSSSVMIIMKAS) traverse the membrane as a helical segment.

This sequence belongs to the ABC transporter superfamily. ABCC family. Conjugate transporter (TC 3.A.1.208) subfamily.

The protein localises to the membrane. This is ABC transporter NFT1 (NFT1) from Saccharomyces cerevisiae (strain ATCC 204508 / S288c) (Baker's yeast).